The chain runs to 493 residues: Glutamate--tRNA ligase (493 aa).

Residues Pro10–Thr20 carry the 'HIGH' region motif. The short motif at Lys251–Arg255 is the 'KMSKS' region element. Lys254 provides a ligand contact to ATP.

This sequence belongs to the class-I aminoacyl-tRNA synthetase family. Glutamate--tRNA ligase type 1 subfamily. Monomer.

Its subcellular location is the cytoplasm. The catalysed reaction is tRNA(Glu) + L-glutamate + ATP = L-glutamyl-tRNA(Glu) + AMP + diphosphate. In terms of biological role, catalyzes the attachment of glutamate to tRNA(Glu) in a two-step reaction: glutamate is first activated by ATP to form Glu-AMP and then transferred to the acceptor end of tRNA(Glu). The sequence is that of Glutamate--tRNA ligase from Pseudomonas putida (strain W619).